Here is a 298-residue protein sequence, read N- to C-terminus: Lipoyl synthase (298 aa).

Cysteine 40, cysteine 45, cysteine 51, cysteine 67, cysteine 71, cysteine 74, and serine 280 together coordinate [4Fe-4S] cluster. Positions 53–269 (AVRKTATFMI…KEIALSKGFS (217 aa)) constitute a Radical SAM core domain.

It belongs to the radical SAM superfamily. Lipoyl synthase family. Requires [4Fe-4S] cluster as cofactor.

It is found in the cytoplasm. The enzyme catalyses [[Fe-S] cluster scaffold protein carrying a second [4Fe-4S](2+) cluster] + N(6)-octanoyl-L-lysyl-[protein] + 2 oxidized [2Fe-2S]-[ferredoxin] + 2 S-adenosyl-L-methionine + 4 H(+) = [[Fe-S] cluster scaffold protein] + N(6)-[(R)-dihydrolipoyl]-L-lysyl-[protein] + 4 Fe(3+) + 2 hydrogen sulfide + 2 5'-deoxyadenosine + 2 L-methionine + 2 reduced [2Fe-2S]-[ferredoxin]. The protein operates within protein modification; protein lipoylation via endogenous pathway; protein N(6)-(lipoyl)lysine from octanoyl-[acyl-carrier-protein]. Catalyzes the radical-mediated insertion of two sulfur atoms into the C-6 and C-8 positions of the octanoyl moiety bound to the lipoyl domains of lipoate-dependent enzymes, thereby converting the octanoylated domains into lipoylated derivatives. This chain is Lipoyl synthase, found in Bacillus mycoides (strain KBAB4) (Bacillus weihenstephanensis).